A 95-amino-acid chain; its full sequence is Co-chaperonin GroES (95 aa).

This sequence belongs to the GroES chaperonin family. Heptamer of 7 subunits arranged in a ring. Interacts with the chaperonin GroEL.

The protein resides in the cytoplasm. Its function is as follows. Together with the chaperonin GroEL, plays an essential role in assisting protein folding. The GroEL-GroES system forms a nano-cage that allows encapsulation of the non-native substrate proteins and provides a physical environment optimized to promote and accelerate protein folding. GroES binds to the apical surface of the GroEL ring, thereby capping the opening of the GroEL channel. This is Co-chaperonin GroES from Clostridium botulinum (strain ATCC 19397 / Type A).